Consider the following 457-residue polypeptide: uncharacterized protein (457 aa).

14 consecutive transmembrane segments (helical) span residues 15–35 (YGAILTIVIGISMAVLDGAIA), 54–74 (IWVVNAYQIAIVISLLSFSFL), 87–107 (GLVVFLLSSLFCALSDSLQML), 112–132 (VIQGFGGAALMSVNTALIRLI), 144–164 (INSFIVAVSSAAGPTIAAAIL), 166–186 (IASWKWLFLINVPLGIIALLL), 205–225 (LPSAVMNALTFGLLITALSGF), 229–249 (QSLTLIAAELVVMVVVGIFFI), 269–289 (LFSLSICTSVCSFCAQMLAMV), 308–328 (LLLTPWPLATMVMAPLAGYLI), 334–354 (GLLGALGLFIMAAGLFSLVLL), 357–377 (SPADINIIWPMILCGAGFGLF), 400–420 (MLGTARLLGQSSGAALVALML), and 428–448 (THVSLMAAAILAVIAACVSGL).

The protein belongs to the major facilitator superfamily. TCR/Tet family.

Its subcellular location is the cell inner membrane. This is an uncharacterized protein from Escherichia coli (strain K12).